A 398-amino-acid chain; its full sequence is Mu-type opioid receptor (398 aa).

Residues 1–66 (MDSSTGPGNT…CPQTGSPSMV (66 aa)) lie on the Extracellular side of the membrane. Asparagine 9, asparagine 31, asparagine 38, asparagine 46, and asparagine 53 each carry an N-linked (GlcNAc...) asparagine glycan. Residues 67 to 91 (TAITIMALYSIVCVVGLFGNFLVMY) form a helical membrane-spanning segment. Topologically, residues 92–104 (VIVRYTKMKTATN) are cytoplasmic. The helical transmembrane segment at 105–129 (IYIFNLALADALATSTLPFQSVNYL) threads the bilayer. Topologically, residues 130-140 (MGTWPFGTILC) are extracellular. A disulfide bond links cysteine 140 and cysteine 217. The chain crosses the membrane as a helical span at residues 141–163 (KIVISIDYYNMFTSIFTLCTMSV). At 164-183 (DRYIAVCHPVKALDFRTPRN) the chain is on the cytoplasmic side. Phosphotyrosine is present on tyrosine 166. Residues 184 to 205 (AKIVNVCNWILSSAIGLPVMFM) form a helical membrane-spanning segment. Residues 206–228 (ATTKYRQGSIDCTLTFSHPTWYW) are Extracellular-facing. Residues 229–253 (ENLLKICVFIFAFIMPVLIITVCYG) traverse the membrane as a helical segment. Over 254-277 (LMILRLKSVRMLSGSKEKDRNLRR) the chain is Cytoplasmic. The chain crosses the membrane as a helical span at residues 278–304 (ITRMVLVVVAVFIVCWTPIHIYVIIKA). Over 305-312 (LITIPETT) the chain is Extracellular. A helical transmembrane segment spans residues 313 to 336 (FQTVSWHFCIALGYTNSCLNPVLY). An NPxxY; plays a role in stabilizing the activated conformation of the receptor motif is present at residues 332 to 336 (NPVLY). Over 337–398 (AFLDENFKRC…NLEAETAPLP (62 aa)) the chain is Cytoplasmic. The S-palmitoyl cysteine moiety is linked to residue cysteine 351. The tract at residues 361–385 (QNSTRVRQNTREHPSTANTVDRTNH) is disordered. Serine 363 carries the phosphoserine modification. A Phosphothreonine modification is found at threonine 370. Phosphoserine is present on serine 375. Threonine 394 carries the phosphothreonine modification.

It belongs to the G-protein coupled receptor 1 family. Forms homooligomers and heterooligomers with other GPCRs, such as OPRD1, OPRK1, OPRL1, NPFFR2, ADRA2A, SSTR2, CNR1 and CCR5 (probably in dimeric forms). Interacts with heterotrimeric G proteins; interaction with a heterotrimeric complex containing GNAI1, GNB1 and GNG2 stabilizes the active conformation of the receptor and increases its affinity for endomorphin-2, the synthetic opioid peptide DAMGO and for morphinan agonists. Interacts with PPL; the interaction disrupts agonist-mediated G-protein activation. Interacts (via C-terminus) with DNAJB4 (via C-terminus). Interacts with calmodulin; the interaction inhibits the constitutive activity of OPRM1; it abolishes basal and attenuates agonist-stimulated G-protein coupling. Interacts with FLNA, PLD2, RANBP9 and WLS and GPM6A. Interacts with RTP4. Interacts with SYP and GNAS. Interacts with RGS9, RGS17, RGS20, RGS4, PPP1R9B and HINT1. Phosphorylated. Differentially phosphorylated in basal and agonist-induced conditions. Agonist-mediated phosphorylation modulates receptor internalization. Phosphorylated by GRK2 in a agonist-dependent manner. Phosphorylation at Tyr-166 requires receptor activation, is dependent on non-receptor protein tyrosine kinase Src and results in a decrease in agonist efficacy by reducing G-protein coupling efficiency. Phosphorylated on tyrosine residues; the phosphorylation is involved in agonist-induced G-protein-independent receptor down-regulation. Phosphorylation at Ser-375 is involved in G-protein-dependent but not beta-arrestin-dependent activation of the ERK pathway. Post-translationally, ubiquitinated. A basal ubiquitination seems not to be related to degradation. Ubiquitination is increased upon formation of OPRM1:OPRD1 oligomers leading to proteasomal degradation; the ubiquitination is diminished by RTP4. In terms of tissue distribution, brain. Is expressed in the cerebral cortex, caudate putamen, nucleus accumbens, septal nuclei, thalamus, hippocampus, and habenula. Not detected in cerebellum.

It localises to the cell membrane. Its subcellular location is the cell projection. The protein localises to the axon. The protein resides in the perikaryon. It is found in the dendrite. It localises to the endosome. Receptor for endogenous opioids such as beta-endorphin and endomorphin. Receptor for natural and synthetic opioids including morphine, heroin, DAMGO, fentanyl, etorphine, buprenorphin and methadone. Also activated by enkephalin peptides, such as Met-enkephalin or Met-enkephalin-Arg-Phe, with higher affinity for Met-enkephalin-Arg-Phe. Agonist binding to the receptor induces coupling to an inactive GDP-bound heterotrimeric G-protein complex and subsequent exchange of GDP for GTP in the G-protein alpha subunit leading to dissociation of the G-protein complex with the free GTP-bound G-protein alpha and the G-protein beta-gamma dimer activating downstream cellular effectors. The agonist- and cell type-specific activity is predominantly coupled to pertussis toxin-sensitive G(i) and G(o) G alpha proteins, GNAI1, GNAI2, GNAI3 and GNAO1 isoforms Alpha-1 and Alpha-2, and to a lesser extent to pertussis toxin-insensitive G alpha proteins GNAZ and GNA15. They mediate an array of downstream cellular responses, including inhibition of adenylate cyclase activity and both N-type and L-type calcium channels, activation of inward rectifying potassium channels, mitogen-activated protein kinase (MAPK), phospholipase C (PLC), phosphoinositide/protein kinase (PKC), phosphoinositide 3-kinase (PI3K) and regulation of NF-kappa-B. Also couples to adenylate cyclase stimulatory G alpha proteins. The selective temporal coupling to G-proteins and subsequent signaling can be regulated by RGSZ proteins, such as RGS9, RGS17 and RGS4. Phosphorylation by members of the GPRK subfamily of Ser/Thr protein kinases and association with beta-arrestins is involved in short-term receptor desensitization. Beta-arrestins associate with the GPRK-phosphorylated receptor and uncouple it from the G-protein thus terminating signal transduction. The phosphorylated receptor is internalized through endocytosis via clathrin-coated pits which involves beta-arrestins. The activation of the ERK pathway occurs either in a G-protein-dependent or a beta-arrestin-dependent manner and is regulated by agonist-specific receptor phosphorylation. Acts as a class A G-protein coupled receptor (GPCR) which dissociates from beta-arrestin at or near the plasma membrane and undergoes rapid recycling. Receptor down-regulation pathways are varying with the agonist and occur dependent or independent of G-protein coupling. Endogenous ligands induce rapid desensitization, endocytosis and recycling. Heterooligomerization with other GPCRs can modulate agonist binding, signaling and trafficking properties. In Rattus norvegicus (Rat), this protein is Mu-type opioid receptor (Oprm1).